A 254-amino-acid polypeptide reads, in one-letter code: MLKPRIIPTLLVQHGGLVKTIKFSNQRYIGDPLNAVRIFNEKEADELTVLDISASREGKAPDYRLIERLANECRMPLSYGGGIKNLEQASRILSFGVEKIIVSSLAIENPKVISSMATYLGNQSVVVAIDFKKTLLTRRYEVFIHNGTKKTGISPEDLLKHAIEFGAGEILLNSIDRDGVMEGYDLEMLKKFRSICTVPMTVLGGAGSLQDLKSLIQNLGIVGVSAGSLFVYKGIHKAVLINYPNREDKEALFY.

Residue D130 is part of the active site.

Belongs to the HisA/HisF family. As to quaternary structure, heterodimer of HisH and HisF.

Its subcellular location is the cytoplasm. It carries out the reaction 5-[(5-phospho-1-deoxy-D-ribulos-1-ylimino)methylamino]-1-(5-phospho-beta-D-ribosyl)imidazole-4-carboxamide + L-glutamine = D-erythro-1-(imidazol-4-yl)glycerol 3-phosphate + 5-amino-1-(5-phospho-beta-D-ribosyl)imidazole-4-carboxamide + L-glutamate + H(+). It functions in the pathway amino-acid biosynthesis; L-histidine biosynthesis; L-histidine from 5-phospho-alpha-D-ribose 1-diphosphate: step 5/9. Its function is as follows. IGPS catalyzes the conversion of PRFAR and glutamine to IGP, AICAR and glutamate. The HisF subunit catalyzes the cyclization activity that produces IGP and AICAR from PRFAR using the ammonia provided by the HisH subunit. The protein is Putative imidazole glycerol phosphate synthase subunit HisF (hisF) of Leptospira interrogans.